A 1162-amino-acid chain; its full sequence is Transcription termination factor 2 (1162 aa).

The Zn(2+) site is built by Cys-6, His-9, Cys-32, and Cys-37. The segment at 6–46 (CPEHGTFCFLKTGVRDGPNKGKSFYVCRADTCSFVRATDIP) adopts a GRF-type zinc-finger fold. Disordered stretches follow at residues 97–116 (PDSK…ETFH), 142–358 (IKGE…EEDD), 388–407 (DRSV…KVEP), and 459–503 (LSPE…TQPV). Positions 105–116 (SNKSQHASETFH) are enriched in polar residues. The span at 142–178 (IKGEGEEKKADKKQREKGDQLFDQKKEQKPEMMEKDL) shows a compositional bias: basic and acidic residues. Lys-143 participates in a covalent cross-link: Glycyl lysine isopeptide (Lys-Gly) (interchain with G-Cter in SUMO2). Over residues 219–232 (IKSQQCQGNELTRP) the composition is skewed to polar residues. Residues 233–245 (SASSQEKSSGKSQ) are compositionally biased toward low complexity. Over residues 246–258 (DVQRESEPLREKV) the composition is skewed to basic and acidic residues. Over residues 261–274 (LLPQNVHSHNSISK) the composition is skewed to polar residues. A compositionally biased stretch (low complexity) spans 323–338 (PAPGGPAAQAAPAAPG). The segment covering 459–485 (LSPEQGTNEKSNSQVPQQSHFTKTTTG) has biased composition (polar residues). Residue Ser-460 is modified to Phosphoserine. The Helicase ATP-binding domain maps to 583–786 (WRESQKPQGG…YSLLKFLRCS (204 aa)). Residue 596–603 (DDMGLGKT) coordinates ATP. Positions 737–740 (DEAH) match the DEAH box motif. The interval 871–890 (KRHESRGNQSGRSPNNPFSR) is disordered. Residues 877-888 (GNQSGRSPNNPF) are compositionally biased toward polar residues. Phosphoserine is present on residues Ser-883 and Ser-908. The Helicase C-terminal domain maps to 995–1157 (SLLAELEAIQ…VTKLTLADLR (163 aa)).

This sequence belongs to the SNF2/RAD54 helicase family. In terms of assembly, interacts with CDC5L. Part of the spliceosome.

It is found in the cytoplasm. Its subcellular location is the nucleus. Its function is as follows. DsDNA-dependent ATPase which acts as a transcription termination factor by coupling ATP hydrolysis with removal of RNA polymerase II from the DNA template. May contribute to mitotic transcription repression. May also be involved in pre-mRNA splicing. The protein is Transcription termination factor 2 (TTF2) of Homo sapiens (Human).